The sequence spans 318 residues: Oxidoreductase swnN (318 aa).

This sequence belongs to the NmrA-type oxidoreductase family. Isoflavone reductase subfamily.

It functions in the pathway mycotoxin biosynthesis. Functionally, aminotransferase; part of the gene cluster that mediates the biosynthesis of swainsonine (SW), a cytotoxic fungal alkaloid and a potential cancer therapy drug. Swainsonine production occurs via a multibranched pathway and is dispensable for fungal colonization of plants and infection of insect hosts. The first step of swainsonine biosynthesis is the production of the precursor pipecolic acid (PA) via conversion of L-lysine (Lys) to 1-piperideine-6-carboxylate (P6C) by the aminotransferase swnA, the latter being further reduced to PA by the reductase swnR. The PKS-NRPS hybrid synthetase swnK uptakes and condensates PA and malonyl-CoA with and without skipping of the ketoreductase (KR) domain in order to produce 3 intermediates, 1-oxoindolizidine, (1S)-1-hydroxyindolizin, and (1R)-1-hydroxyindolizine; with the transisomer (1S)-1-hydroxyindolizin being predominant. The terminal thioester reductase (TE) domain of swnK is involved in reduction of the thioester bond to release the intermediate aldehydes. The oxidoreductase swnN could contribute to the reduction of 1-oxoindolizidine to (1S)-1-hydroxyindolizin and (1R)-1-hydroxyindolizine, contributing to the major route of SW production. The dioxygenase swnH2 would be responsible for the oxidization of (1R)-1-hydroxyindolizine into (1R,2S)-1,2-dihydroxyindolizine and of (1S)-1-hydroxyindolizin to yield both (1R,2S)-1,2-dihydroxyindolizine and (1S,2S)-1,2-dihydroxyindolizine. The dioxygenase swnH1 then performs the conversion of the 1,2-dihydroxyindolizine epimers to SW. This Arthroderma benhamiae (strain ATCC MYA-4681 / CBS 112371) (Trichophyton mentagrophytes) protein is Oxidoreductase swnN.